A 335-amino-acid polypeptide reads, in one-letter code: Homeobox protein Hox-A1 (335 aa).

A disordered region spans residues 61–80; it reads IGSPHHHHHHHHRHPQPATY. A compositionally biased stretch (basic residues) spans 64–75; sequence PHHHHHHHHRHP. Residues 75–203 form an interaction with OGT region; it reads PQPATYQTSG…PASETSSPAQ (129 aa). The Antp-type hexapeptide signature appears at 204–209; the sequence is TFDWMK. A DNA-binding region (homeobox) is located at residues 229-288; the sequence is PNAVRTNFTTKQLTELEKEFHFNKYLTRARRVEIAASLQLNETQVKIWFQNRRMKQKKRE. Residues 281–335 are disordered; sequence RMKQKKREKEGLLPISPATPPGNDEKAEESSEKSSSSPCVPSPGSSTSDTLTTSH. Positions 303–312 are enriched in basic and acidic residues; sequence NDEKAEESSE. Residues 313–328 show a composition bias toward low complexity; that stretch reads KSSSSPCVPSPGSSTS.

The protein belongs to the Antp homeobox family. Labial subfamily. In terms of assembly, interacts with OGT (via TPR repeats domain); the interaction takes place mainly in the nucleus. Forms a DNA-binding heterodimer with transcription factor PBX1.

It localises to the nucleus. Its function is as follows. Sequence-specific transcription factor. Regulates multiple developmental processes including brainstem, inner and outer ear, abducens nerve and cardiovascular development and morphogenesis as well as cognition and behavior. Also part of a developmental regulatory system that provides cells with specific positional identities on the anterior-posterior axis. Acts on the anterior body structures. Seems to act in the maintenance and/or generation of hindbrain segments. Activates transcription in the presence of PBX1A and PKNOX1. The sequence is that of Homeobox protein Hox-A1 (HOXA1) from Homo sapiens (Human).